The sequence spans 545 residues: Betaine receptor acr-23 (545 aa).

A signal peptide spans 1–19; sequence MHRIYTFLIFISQLALGLS. Residues 20–244 are Extracellular-facing; that stretch reads NNPDIPIQYE…DVVIQRKPLY (225 aa). N-linked (GlcNAc...) asparagine glycosylation is found at Asn53 and Asn97. Cystine bridges form between Cys157–Cys171 and Cys224–Cys225. Asn228 carries an N-linked (GlcNAc...) asparagine glycan. Residues 245–265 traverse the membrane as a helical segment; sequence YVLNLIAPTAVITFISIIGFF. The N-linked (GlcNAc...) asparagine glycan is linked to Asn276. 2 consecutive transmembrane segments (helical) span residues 287–307 and 317–337; these read EKIT…FMVS and VPLI…GTLA. The Cytoplasmic portion of the chain corresponds to 338–512; that stretch reads ASSVIFVQKL…WDWVAAVLER (175 aa). A helical membrane pass occupies residues 513 to 533; sequence VFLIFFTICFLFSAIGINLYG.

It belongs to the ligand-gated ion channel (TC 1.A.9) family. Acetylcholine receptor (TC 1.A.9.1) subfamily. Expressed in the body wall muscles that are arranged into four longitudinal bundles, some mechanosensory neurons, the head muscles and multiple interneurons. Not expressed in motor neurons (at protein level).

Its subcellular location is the cell membrane. In terms of biological role, betaine receptor that functions as a ligand-gated non-selective monovalent cation channel in mechanosensory neurons to maintain basal levels of locomotion. The channel is permeable to Na(+) and K(+) but not to Ba(2+) or Ca(2+) ions. Elicits current in response to betaine, very weak current in response to choline, virtually no current in response to acetylcholine and nicotine, and no current in response to glycine and GABA. This Caenorhabditis elegans protein is Betaine receptor acr-23.